The sequence spans 683 residues: Synaptic vesicle glycoprotein 2B (683 aa).

Residues 1 to 10 (MDDYRYRDNY) are compositionally biased toward basic and acidic residues. A disordered region spans residues 1 to 73 (MDDYRYRDNY…TKMAPSRADG (73 aa)). Residues 1–110 (MDDYRYRDNY…ECGHGRFQWT (110 aa)) lie on the Cytoplasmic side of the membrane. S33 carries the phosphoserine modification. T36 is modified (phosphothreonine). The chain crosses the membrane as a helical span at residues 111 to 131 (LFFVLGLALMADGVEIFVVSF). Topologically, residues 132–148 (ALPSAEKDMCLSSSKKG) are extracellular. Residues 149–169 (MLGLIVYLGMMAGAFILGGLA) form a helical membrane-spanning segment. Topologically, residues 170–182 (DKLGRKKVLSMSL) are cytoplasmic. Residues 183–203 (AINASFASLSSFVQGYGAFLF) traverse the membrane as a helical segment. The Extracellular segment spans residues 204-205 (CR). Residues 206 to 226 (LISGIGIGGSLPIVFAYFSEF) form a helical membrane-spanning segment. The Cytoplasmic segment spans residues 227–237 (LSREKRGEHLS). A helical transmembrane segment spans residues 238–258 (WLGIFWMTGGIYASAMAWSII). The Extracellular segment spans residues 259 to 277 (PHYGWGFSMGTNYHFHSWR). Residues 278–298 (VFVIVCALPATVSMVALKFMP) form a helical membrane-spanning segment. Over 299-390 (ESPRFLLEMG…CVMGPYRMNT (92 aa)) the chain is Cytoplasmic. The helical transmembrane segment at 391–411 (LILAVVWFTMALSYYGLTVWF) threads the bilayer. Residues 412 to 535 (PDMIRYFQDE…CHMDFEEDND (124 aa)) are Extracellular-facing. Y423 is subject to Phosphotyrosine. N441, N491, and N516 each carry an N-linked (GlcNAc...) asparagine glycan. Residues 536 to 556 (FLIYLVSFLGSLSVLPGNIIS) form a helical membrane-spanning segment. Residues 557-565 (ALLMDRIGR) are Cytoplasmic-facing. A helical membrane pass occupies residues 566–586 (LKMIGGSMLISAVCCFFLFFG). The Extracellular portion of the chain corresponds to 587–592 (NSESAM). The helical transmembrane segment at 593–613 (IGWQCLFCGTSIAAWNALDVI) threads the bilayer. Topologically, residues 614–626 (TVELYPTNQRATA) are cytoplasmic. A helical membrane pass occupies residues 627–649 (FGILNGLCKFGAILGNTIFASFV). The Extracellular segment spans residues 650–653 (GITK). Residues 654 to 672 (VVPILLAAASLVGGGLIAL) traverse the membrane as a helical segment. The Cytoplasmic segment spans residues 673–683 (RLPETREQVLM).

The protein belongs to the major facilitator superfamily. As to quaternary structure, interacts with SYT1 in a calcium-independent manner. Forms a complex with SYT1, syntaxin-1 and SNAP25. (Microbial infection) Interacts with C.botulinum neurotoxin type A (BoNT/A, botA). In terms of assembly, (Microbial infection) Interacts with C.botulinum neurotoxin type D (BoNT/D, botD). No evidence for its interaction with BoNT/D has also been published. N-glycosylated. In terms of processing, the N-terminal cytoplasmic domain is phosphorylated by CK1. As to expression, expressed in ribbon synapses of the retina (at protein level). Expressed in diaphragm motor nerve terminals (at protein level). Expressed in hippocampus neurons (at protein level).

The protein localises to the cytoplasmic vesicle. It localises to the secretory vesicle. It is found in the synaptic vesicle membrane. The protein resides in the acrosome. Its function is as follows. Probably plays a role in the control of regulated secretion in neural and endocrine cells. In terms of biological role, (Microbial infection) Receptor for C.botulinum neurotoxin type A (BoNT/A, botA); the toxin probably binds via extracellular loop 4. Functionally, (Microbial infection) Possible receptor for C.botulinum neurotoxin type D (BoNT/D, botD). Not a receptor for C.botulinum neurotoxin type D (BoNT/D, botD). (Microbial infection) Receptor for C.botulinum neurotoxin type E (BoNT/E); the toxin probably binds via extracellular loop 4. It probably requires glycosylation of Asn-516. The polypeptide is Synaptic vesicle glycoprotein 2B (Sv2b) (Mus musculus (Mouse)).